Reading from the N-terminus, the 1250-residue chain is Cell adhesion molecule-related/down-regulated by oncogenes (1250 aa).

The first 24 residues, 1–24 (MHPDLGPLWTLLYVLVILCSSVSS), serve as a signal peptide directing secretion. The Extracellular segment spans residues 25 to 962 (DLAPYFISEP…SPARSSDMLY (938 aa)). 5 Ig-like C2-type domains span residues 28-113 (PYFI…ATVS), 119-203 (DFDS…LKVE), 224-302 (PALS…KHVT), 309-395 (EHAS…GRLQ), and 404-515 (PVIV…AFLT). C49 and C96 form a disulfide bridge. Residues N99, N179, N286, N293, N341, and N426 are each glycosylated (N-linked (GlcNAc...) asparagine). Intrachain disulfides connect C140–C190 and C242–C289. Disulfide bonds link C332–C379 and C425–C499. Over residues 524 to 534 (KAESVTPSEAS) the composition is skewed to polar residues. The disordered stretch occupies residues 524-547 (KAESVTPSEASQNDERDPQDGSES). A glycan (N-linked (GlcNAc...) asparagine) is linked at N569. Fibronectin type-III domains are found at residues 572–673 (VPDA…SKEK), 719–814 (APDR…VAGF), and 822–922 (PITG…TKVK). Residue N869 is glycosylated (N-linked (GlcNAc...) asparagine). The disordered stretch occupies residues 929–951 (DYPVKELSTPPSSSGNAGNVGPA). The helical transmembrane segment at 963 to 983 (LIVGCVLGVMVLILMVFIALC) threads the bilayer. The Cytoplasmic segment spans residues 984–1250 (LWKSRQQSTI…SVVLQQAQET (267 aa)). Disordered regions lie at residues 1178 to 1208 (DNIS…AEDK) and 1223 to 1250 (DCGE…AQET). Over residues 1193-1208 (EFSRGDSSGHSEAEDK) the composition is skewed to basic and acidic residues.

In terms of assembly, part of a complex that contains BOC, CDON, NEO1, cadherins and CTNNB1. Interacts with NTN3. Interacts with DHH, IHH and SHH. In terms of processing, N-glycosylated. In terms of tissue distribution, highly expressed in somites and the dorsal lips of the neural tube during embryogenesis. Detected at very low levels in adult tissues.

It is found in the cell membrane. Component of a cell-surface receptor complex that mediates cell-cell interactions between muscle precursor cells. Promotes differentiation of myogenic cells. Required for response to NTN3 and activation of NFATC3. The chain is Cell adhesion molecule-related/down-regulated by oncogenes (Cdon) from Mus musculus (Mouse).